Reading from the N-terminus, the 274-residue chain is Pantothenate synthetase (274 aa).

ATP is bound at residue 27–34; that stretch reads MGALHKGH. Histidine 34 functions as the Proton donor in the catalytic mechanism. Glutamine 58 contributes to the (R)-pantoate binding site. A beta-alanine-binding site is contributed by glutamine 58. An ATP-binding site is contributed by 145 to 148; it reads GQKD. Glutamine 151 serves as a coordination point for (R)-pantoate. Residue 182 to 185 coordinates ATP; it reads LSSR.

The protein belongs to the pantothenate synthetase family. As to quaternary structure, homodimer.

It is found in the cytoplasm. The catalysed reaction is (R)-pantoate + beta-alanine + ATP = (R)-pantothenate + AMP + diphosphate + H(+). It participates in cofactor biosynthesis; (R)-pantothenate biosynthesis; (R)-pantothenate from (R)-pantoate and beta-alanine: step 1/1. Its function is as follows. Catalyzes the condensation of pantoate with beta-alanine in an ATP-dependent reaction via a pantoyl-adenylate intermediate. The chain is Pantothenate synthetase from Wolinella succinogenes (strain ATCC 29543 / DSM 1740 / CCUG 13145 / JCM 31913 / LMG 7466 / NCTC 11488 / FDC 602W) (Vibrio succinogenes).